The chain runs to 325 residues: Exogastrula-inducing polypeptide (325 aa).

The signal sequence occupies residues 1–19 (MKVSLVLLIAVFGLAMVAA). Residues 20–45 (EETLESKLQMALKSLLQENEELNLEG) constitute a propeptide that is removed on maturation. 2 EGF-like domains span residues 48-91 (TKGG…SSCY) and 107-154 (TVAR…GGCS). Cystine bridges form between cysteine 52–cysteine 65, cysteine 59–cysteine 75, cysteine 77–cysteine 90, cysteine 111–cysteine 124, cysteine 118–cysteine 138, and cysteine 140–cysteine 153. Positions 160–177 (ELEYLSYVARDVEMEMLA) are excised as a propeptide. One can recognise an EGF-like 3 domain in the interval 180 to 226 (SVYQCNRDTNSCDGFGKCEKSTFGRTTGQYICNCDDGYRNNAYGGCS). Intrachain disulfides connect cysteine 184-cysteine 197, cysteine 191-cysteine 211, and cysteine 213-cysteine 225. Residues 232-249 (EIEYLSMIARDQELEMQA) constitute a propeptide that is removed on maturation. The EGF-like 4 domain occupies 252-298 (SLPQCNRDTNYCDGFGQCVKSTFGRTTGQYICSCNDGYENNLYGGCS). 3 cysteine pairs are disulfide-bonded: cysteine 256/cysteine 269, cysteine 263/cysteine 283, and cysteine 285/cysteine 297. A propeptide spanning residues 313–325 (MEILRSLANLLEE) is cleaved from the precursor.

Its subcellular location is the secreted. It localises to the extracellular space. It is found in the extracellular matrix. Its function is as follows. The EGIP peptides are factors effective to extrude the archenteron toward outside of embryos. May have a role in the induction of gastrulation. This chain is Exogastrula-inducing polypeptide, found in Heliocidaris crassispina (Sea urchin).